The chain runs to 104 residues: Protein SMALL AUXIN UP-REGULATED RNA 12 (104 aa).

Belongs to the ARG7 family. As to expression, expressed in flowers and etiolated hypocotyls.

The protein localises to the cell membrane. Provide a mechanistic link between auxin and plasma membrane H(+)-ATPases (PM H(+)-ATPases, e.g. AHA1 and AHA2), and triggers PM H(+)-ATPases activity by promoting phosphorylation of their C-terminal autoinhibitory domain as a result of PP2C-D subfamily of type 2C phosphatases inhibition, thus leading to the acidification of the apoplast and the facilitation of solutes and water uptake to drive cell expansion. Triggers plant growth probably by promoting cell elongation. Regulates branch angles and bending. The protein is Protein SMALL AUXIN UP-REGULATED RNA 12 of Arabidopsis thaliana (Mouse-ear cress).